We begin with the raw amino-acid sequence, 400 residues long: NADPH dehydrogenase 2 (400 aa).

FMN-binding residues include T38 and Q115. 2 residues coordinate substrate: H192 and N195. The active-site Proton donor is the Y197. FMN-binding residues include R244 and R349. At S353 the chain carries Phosphoserine. A substrate-binding site is contributed by Y376. S379 is modified (phosphoserine).

The protein belongs to the NADH:flavin oxidoreductase/NADH oxidase family. In terms of assembly, homodimer or heterodimer with OYE3. Requires FMN as cofactor.

It localises to the cytoplasm. The protein localises to the nucleus. The protein resides in the mitochondrion. The enzyme catalyses A + NADPH + H(+) = AH2 + NADP(+). Its function is as follows. Flavin-dependent enoate reductase that catalyzes the chemo- and stereoslective hydrogenation of electron-poor alkenes. The enzyme is reduced by NADPH, and oxygen, quinones, and alpha,beta-unsaturated aldehydes and ketones can act as electron acceptors to complete catalytic turnover. The physiological oxidant remains elusive. Has an antioxidant activity, reducing reactive oxygen species (ROS) levels when overexpressed. Formation of OYE2-OYE3 heterodimers contribute to the induction of programmed cell death upon oxidative stress. This is NADPH dehydrogenase 2 from Saccharomyces cerevisiae (strain ATCC 204508 / S288c) (Baker's yeast).